The chain runs to 458 residues: MPLSEDTIKAVEATADLVAAQGLDFTRAFYERMLTRNEELKDVFNLSHQRDLRQPKALLDSLVAYARSIRKINELHELQEQGLPVPAERLAELQGFFAVAERIAHKHASVGIQPAQYQIVGAHLLATIEERVTADKAILAAWSKAYDFLAHLFVRREEEIYTETESSEGGWRQTRSFRVEEKAQITERIFRFRLVPAEKGTAVALHKPGQYLAVFVRDPRLSPHRQIRQYSITSAPNHTYYEIAVHRDKQATVSGYLHDHVAVGDLLKLAPPYGDFFLEYREPGGQAADGQPSPEPLALHGGAVNFAAERMTPIVLISGGIGQTPLLSILRFLAEKEGQAAIRPIFWIHAAHDSRARAFKAEVDAIKVTDLPGLRTTTFLSEVDETMDKKGEDYDFAGRISLDRVPGLAELEADGANPHYFFVGPAGFMVAVEQQLKAWSVPEDRIHFEMFGPFKPLQ.

One can recognise a Globin domain in the interval 2-158; that stretch reads PLSEDTIKAV…LAHLFVRREE (157 aa). Residue His107 coordinates heme b. Active-site charge relay system residues include Tyr117 and Glu157. Positions 169–457 are reductase; the sequence is GGWRQTRSFR…FEMFGPFKPL (289 aa). The FAD-binding FR-type domain maps to 172-279; sequence RQTRSFRVEE…APPYGDFFLE (108 aa). Residues Tyr211 and 228–231 each bind FAD; that span reads RQYS. Residue 320-325 participates in NADP(+) binding; it reads GIGQTP. 450–453 contributes to the FAD binding site; sequence MFGP.

It belongs to the globin family. Two-domain flavohemoproteins subfamily. The protein in the C-terminal section; belongs to the flavoprotein pyridine nucleotide cytochrome reductase family. Monomer. Heme b serves as cofactor. It depends on FAD as a cofactor.

The catalysed reaction is 2 nitric oxide + NADPH + 2 O2 = 2 nitrate + NADP(+) + H(+). It carries out the reaction 2 nitric oxide + NADH + 2 O2 = 2 nitrate + NAD(+) + H(+). Its function is as follows. Flavohemoprotein involved in nitric oxide (NO) detoxification in an aerobic process, termed nitric oxide dioxygenase (NOD) reaction that utilizes O(2) and NAD(P)H to convert NO to nitrate, which protects the protozoan parasite from various noxious nitrogen compounds. Therefore, plays a central role in the inducible response to nitrosative stress. May also be involved in O(2) detoxification. This Giardia intestinalis (strain ATCC 50581 / GS clone H7) (Giardia lamblia) protein is Flavohemoprotein (hmpA).